A 2620-amino-acid polypeptide reads, in one-letter code: MESEEEQHMTTLLCMGFSDPATIRKALRLAKNDINEAVALLTNERPGLDYGGYEPMDSGGGPSPGPGGGPRGDGGGDGGGGGPSRGGSTGGGGGFDPPPAYHEVVDAEKNDENGNCSGEGIEFPTTNLYELESRVLTDHWSIPYKREESLGKCLLASTYLARLGLSESDENCRRFMDRCMPEAFKKLLTSSAVHKWGTEIHEGIYNMLMLLIELVAERIKQDPIPTGLLGVLTMAFNPDNEYHFKNRMKVSQRNWAEVFGEGNMFAVSPVSTFQKEPHGWVVDLVNKFGELGGFAAIQAKLHSEDIELGAVSALIQPLGVCAEYLNSSVVQPMLDPVILTTIQDVRSVEEKDLKDKRLVSIPELLSAVKLLCMRFQPDLVTIVDDLRLDILLRMLKSPHFSAKMNSLKEVTKLIEDSTLSKSVKNAIDTDRLLDWLVENSVLSIALEGNIDQAQYCDRIKGIIELLGSKLSLDELTKIWKIQSGQSSTVIENIHTIIAAAAVKFNSDQLNHLFVLIQKSWETESDRVRQKLLSLIGRIGREARFETTSGKVLDVLWELAHLPTLPSSLIQQALEEHLTILSDAYAVKEAIKRSYIIKCIEDIKRPGEWSGLEKNKKDGFKSSQLNNPQFVWVVPALRQLHEITRSFIKQTYQKQDKSIIQDLKKNFEIVKLVTGSLIACHRLAAAVAGPGGLSGSTLVDGRYTYREYLEAHLKFLAFFLQEATLYLGWNRAKEIWECLVTGQDVCELDREMCFEWFTKGQHDLESDVQQQLFKEKILKLESYEITMNGFNLFKTFFENVNLCDHRLKRQGAQLYVEKLELIGMDFIWKIAMESPDEEIANEAIQLIINYSYINLNPRLKKDSVSLHKKFIADCYTRLEAASSALGGPTLTHAVTRATKMLTATAMPTVATSVQSPYRSTKLVIIERLLLLAERYVITIEDFYSVPRTILPHGASFHGHLLTLNVTYESTKDTFTVEAHSNETIGSVRWKIAKQLCSPVDNIQIFTNDSLLTVNKDQKLLHQLGFSDEQILTVKTSGSGTPSGSSADSSTSSSSSSSGVFSSSYAMEQEKSLPGVVMALVCNVFDMLYQLANLEEPRITLRVRKLLLLIPTDPAIQEALDQLDSLGRKKTLLSESSSQSSKSPSLSSKQQHQPSASSILESLFRSFAPGMSTFRVLYNLEVLSSKLMPTADDDMARSCAKSFCENFLKAGGLSLVVNVMQRDSIPSEVDYETRQGVYSICLQLARFLLVGQTMPTLLDEDLTKDGIEALSSRPFRNVSRQTSRQMSLCGTPEKSSYRQLSVSDRSSIRVEEIIPAARVAIQTMEVSDFTSTVACFMRLSWAAAAGRLDLVGSSQPIKESNSLCPAGIRNRLSSSGSNCSSGSEGEPVALHAGICVRQQSVSTKDSLIAGEALSLLVTCLQLRSQQLASFYNLPCVADFIIDILLGSPSAEIRRVACDQLYTLSQTDTSAHPDVQKPNQFLLGVILTAQLPLWSPTSIMRGVNQRLLSQCMEYFDLRCQLLDDLTTSEMEQLRISPATMLEDEITWLDNFEPNRTAECETSEADNILLAGHLRLIKTLLSLCGAEKEMLGSSLIKPLLDDFLFRASRIILNSHSPAGSAAISQQDFHPKCSTANSRLAAYEVLVMLADSSPSNLQIIIKELLSMHHQPDPALTKEFDYLPPVDSRSSSGFVGLRNGGATCYMNAVFQQLYMQPGLPESLLSVDDDTDNPDDSVFYQVQSLFGHLMESKLQYYVPENFWKIFKMWNKELYVREQQDAYEFFTSLIDQMDEYLKKMGRDQIFKNTFQGIYSDQKICKDCPHRYEREEAFMALNLGVTSCQSLEISLDQFVRGEVLEGSNAYYCEKCKEKRITVKRTCIKSLPSVLVIHLMRFGFDWESGRSIKYDEQIRFPWMLNMEPYTVSGMARQDSSSEVGENGRSVDQGGGGSPRKKVALTENYELVGVIVHSGQAHAGHYYSFIKDRRGCGKGKWYKFNDTVIEEFDLNDETLEYECFGGEYRPKVYDQTNPYTDVRRRYWNAYMLFYQRVSDQNSPVLPKKSRVSVVRQEAEDLSLSAPSSPEISPQSSPRPHRPNNDRLSILTKLVKKGEKKGLFVEKMPARIYQMVRDENLKFMKNRDVYSSDYFSFVLSLASLNATKLKHPYYPCMAKVSLQLAIQFLFQTYLRTKKKLRVDTEEWIATIEALLSKSFDACQWLVEYFISSEGRELIKIFLLECNVREVRVAVATILEKTLDSALFYQDKLKSLHQLLEVLLALLDKDVPENCKNCAQYFFLFNTFVQKQGIRAGDLLLRHSALRHMISFLLGASRQNNQIRRWSSAQAREFGNLHNTVALLVLHSDVSSQRNVAPGIFKQRPPISIAPSSPLLPLHEEVEALLFMSEGKPYLLEVMFALRELTGSLLALIEMVVYCCFCNEHFSFTMLHFIKNQLETAPPHELKNTFQLLHEILVIEDPIQVERVKFVFETENGLLALMHHSNHVDSSRCYQCVKFLVTLAQKCPAAKEYFKENSHHWSWAVQWLQKKMSEHYWTPQSNVSNETSTGKTFQRTISAQDTLAYATALLNEKEQSGSSNGSESSPANENGDRHLQQGSESPMMIGELRSDLDDVDP.

The 42-residue stretch at 3–44 folds into the UBA domain; sequence SEEEQHMTTLLCMGFSDPATIRKALRLAKNDINEAVALLTNE. A disordered region spans residues 45–102; it reads RPGLDYGGYEPMDSGGGPSPGPGGGPRGDGGGDGGGGGPSRGGSTGGGGGFDPPPAYH. The span at 58–95 shows a compositional bias: gly residues; it reads SGGGPSPGPGGGPRGDGGGDGGGGGPSRGGSTGGGGGF. S63 and S88 each carry phosphoserine. Y942 is subject to Phosphotyrosine. 2 disordered regions span residues 1034-1054 and 1129-1151; these read TSGS…SSSS and TLLS…QQHQ. Over residues 1131–1151 the composition is skewed to low complexity; sequence LSESSSQSSKSPSLSSKQQHQ. 2 positions are modified to phosphoserine: S1141 and S1285. The USP domain occupies 1689–2042; sequence VGLRNGGATC…NAYMLFYQRV (354 aa). C1698 functions as the Nucleophile in the catalytic mechanism. The disordered stretch occupies residues 1921-1945; sequence ARQDSSSEVGENGRSVDQGGGGSPR. Residue S1943 is modified to Phosphoserine. Catalysis depends on H1970, which acts as the Proton acceptor. Phosphoserine occurs at positions 2047, 2077, and 2561. Residues 2063-2090 form a disordered region; that stretch reads AEDLSLSAPSSPEISPQSSPRPHRPNND. Residues 2069–2082 are compositionally biased toward low complexity; sequence SAPSSPEISPQSSP. Residue T2565 is modified to Phosphothreonine. Positions 2575–2620 are disordered; sequence EKEQSGSSNGSESSPANENGDRHLQQGSESPMMIGELRSDLDDVDP. Over residues 2579 to 2592 the composition is skewed to low complexity; the sequence is SGSSNGSESSPANE. Position 2604 is a phosphoserine (S2604). Residues 2611–2620 show a composition bias toward basic and acidic residues; it reads LRSDLDDVDP.

Belongs to the peptidase C19 family. (Microbial infection) Interacts with human cytomegalovirus protein UL38.

It carries out the reaction Thiol-dependent hydrolysis of ester, thioester, amide, peptide and isopeptide bonds formed by the C-terminal Gly of ubiquitin (a 76-residue protein attached to proteins as an intracellular targeting signal).. Ubiquitin-specific protease that regulates cell survival in various contexts through modulating the protein stability of some of its substrates including DDB2, MCL1 or TP53. Plays a positive role on ferritinophagy where ferritin is degraded in lysosomes and releases free iron. This Homo sapiens (Human) protein is Ubiquitin carboxyl-terminal hydrolase 24 (USP24).